An 828-amino-acid polypeptide reads, in one-letter code: Hapless 2 (828 aa).

The N-terminal stretch at Met1–Cys32 is a signal peptide. The Extracellular segment spans residues Asp33–Lys680. The cysteines at positions 53 and 62 are disulfide-linked. A glycan (N-linked (GlcNAc...) asparagine) is linked at Asn74. Cystine bridges form between Cys142–Cys209, Cys170–Cys381, Cys172–Cys191, and Cys363–Cys388. The segment at Thr174–Cys191 is cd loop; involved in gamete fusion. N-linked (GlcNAc...) asparagine glycans are attached at residues Asn233, Asn250, Asn264, Asn293, and Asn333. 4 N-linked (GlcNAc...) asparagine glycosylation sites follow: Asn479, Asn516, Asn531, and Asn539. Residues Cys546 and Cys592 are joined by a disulfide bond. The chain crosses the membrane as a helical span at residues Phe681 to Phe701. Over Leu702–Arg828 the chain is Cytoplasmic. The segment at Arg773–Arg828 is disordered. Basic residues predominate over residues Ile788 to Lys798. Residues Gln799–Ala814 show a composition bias toward basic and acidic residues.

The protein belongs to the HAP2/GCS1 family.

The protein resides in the cell membrane. In terms of biological role, during fertilization, required on male gametes for their fusion with female gametes, and for subsequent ookinete formation in the host. Thereby, required for mosquito-mediated transmission to other animals. Probably initiates the fusion of gamete cell membranes by inserting part of its extracellular domain into the cell membrane of a female gamete. This Plasmodium berghei (strain Anka) protein is Hapless 2.